A 267-amino-acid chain; its full sequence is GTP cyclohydrolase MptA (267 aa).

Belongs to the GTP cyclohydrolase IV family. As to quaternary structure, homodimer. The cofactor is Fe(2+).

The enzyme catalyses GTP + H2O = 7,8-dihydroneopterin 2',3'-cyclic phosphate + formate + diphosphate + H(+). Its pathway is cofactor biosynthesis; 5,6,7,8-tetrahydromethanopterin biosynthesis. Its function is as follows. Converts GTP to 7,8-dihydro-D-neopterin 2',3'-cyclic phosphate, the first intermediate in the biosynthesis of coenzyme methanopterin. This is GTP cyclohydrolase MptA from Thermococcus kodakarensis (strain ATCC BAA-918 / JCM 12380 / KOD1) (Pyrococcus kodakaraensis (strain KOD1)).